We begin with the raw amino-acid sequence, 423 residues long: Major royal jelly protein 9 (423 aa).

The first 20 residues, 1–20 (MSFNIWWLILYFSIVCQAKA), serve as a signal peptide directing secretion. 5 N-linked (GlcNAc...) asparagine glycosylation sites follow: Asn-110, Asn-118, Asn-177, Asn-196, and Asn-345.

The protein belongs to the major royal jelly protein family. As to expression, expressed at very low levels in the hypopharyngeal glands of adult worker bees (at protein level); expression peaks at 12 days post eclosion. Secreted into bee venom in the sting apparatus (at protein level). Expressed in the brains of adult worker bees peaking at 12 days post eclosion (at protein level). Expressed in the spermatheca of adult queen bees (at protein level); expression levels are higher in mated queens than in virgin queens. Along with Mrjp8 expressed at very low levels in the head of worker bees compared to other major royal jelly proteins.

The protein resides in the secreted. Functionally, component of bee sting venom. Component of royal jelly, a substance produced in the hypopharyngeal gland containing proteins, free amino acids, fatty acids, sugars and other nutrients, which is fed to developing larvae by worker nurse bees; may be present only at trace levels. All larvae are fed some royal jelly (also known as worker jelly) early in their development but it forms the principal source of nutrition for larvae destined to become queen bees. Produced in the spermatheca of adult queen bees, along with other major royal jelly proteins, where it may act as a nutrient supply for sperm stored by mated queens, or be involved in energy metabolism. The polypeptide is Major royal jelly protein 9 (Apis mellifera (Honeybee)).